The sequence spans 1499 residues: Autophagy-related protein 2 (1499 aa).

Polar residues predominate over residues E211–S221. The disordered stretch occupies residues E211–S237. Over residues K224–D234 the composition is skewed to acidic residues.

This sequence belongs to the ATG2 family.

The protein localises to the preautophagosomal structure membrane. Its subcellular location is the endoplasmic reticulum membrane. It catalyses the reaction a 1,2-diacyl-sn-glycero-3-phosphocholine(in) = a 1,2-diacyl-sn-glycero-3-phosphocholine(out). It carries out the reaction a 1,2-diacyl-sn-glycero-3-phospho-L-serine(in) = a 1,2-diacyl-sn-glycero-3-phospho-L-serine(out). The enzyme catalyses a 1,2-diacyl-sn-glycero-3-phosphoethanolamine(in) = a 1,2-diacyl-sn-glycero-3-phosphoethanolamine(out). In terms of biological role, lipid transfer protein required for autophagosome completion and peroxisome degradation. Tethers the edge of the isolation membrane (IM) to the endoplasmic reticulum (ER) and mediates direct lipid transfer from ER to IM for IM expansion. ATG2 binds to the ER exit site (ERES), which is the membrane source for autophagosome formation, using basic residues in its N-terminal region (NR) and to the expanding edge of the IM through its C-terminal region. The latter binding is assisted by an ATG18-PtdIns3P interaction. ATG2 then extracts phospholipids from the membrane source using its NR and transfers them to ATG9 to the IM through its predicted beta-sheet-rich structure for membrane expansion. In Kluyveromyces marxianus (strain DMKU3-1042 / BCC 29191 / NBRC 104275) (Yeast), this protein is Autophagy-related protein 2.